The following is a 514-amino-acid chain: Arabinose import ATP-binding protein AraG (514 aa).

2 consecutive ABC transporter domains span residues 16–251 (LRFN…MVGR) and 251–507 (RDIQ…LPRH). Residue 48–55 (GENGAGKS) participates in ATP binding.

This sequence belongs to the ABC transporter superfamily. Arabinose importer (TC 3.A.1.2.2) family. In terms of assembly, the complex is composed of two ATP-binding proteins (AraG), two transmembrane proteins (AraH) and a solute-binding protein (AraF).

It is found in the cell inner membrane. It carries out the reaction L-arabinose(out) + ATP + H2O = L-arabinose(in) + ADP + phosphate + H(+). In terms of biological role, part of the ABC transporter complex AraFGH involved in arabinose import. Responsible for energy coupling to the transport system. This is Arabinose import ATP-binding protein AraG from Pseudomonas fluorescens (strain Pf0-1).